We begin with the raw amino-acid sequence, 472 residues long: Carbohydrate sulfotransferase 3 (472 aa).

Over 1 to 19 (MEKGLALPQDFRDLVHSLK) the chain is Cytoplasmic. Residues 20–38 (IRGRYVLFLAFVVIVFIFI) traverse the membrane as a helical; Signal-anchor for type II membrane protein segment. Topologically, residues 39–472 (EKENKIISRV…LEERGTFWVT (434 aa)) are lumenal. Residues asparagine 63, asparagine 74, and asparagine 96 are each glycosylated (N-linked (GlcNAc...) asparagine). 135-141 (TRTGSSF) contacts 3'-phosphoadenylyl sulfate. A glycan (N-linked (GlcNAc...) asparagine) is linked at asparagine 250. 295–303 (RDPRAVLAS) contacts 3'-phosphoadenylyl sulfate. 2 N-linked (GlcNAc...) asparagine glycosylation sites follow: asparagine 413 and asparagine 457.

It belongs to the sulfotransferase 1 family. Gal/GlcNAc/GalNAc subfamily. N-glycosylated. In terms of tissue distribution, widely expressed. Highly expressed in spleen, lung, eye and stomach. Constitutively expressed at low level during the mid- to late-gestation period. Expressed in the brain in a temporally controlled manner: peaks at 2 weeks after birth in the cerebellum, but at 3 weeks in the cerebrum. Localizes to stromal cells in the bone marrow, and stromal cells in the marginal zone and red pulp of the spleen, but the sense probe did not.

Its subcellular location is the golgi apparatus membrane. It catalyses the reaction chondroitin beta-D-glucuronate + n 3'-phosphoadenylyl sulfate = chondroitin 6'-sulfate + n adenosine 3',5'-bisphosphate + n H(+). It carries out the reaction 3'-phosphoadenylyl sulfate + keratan = adenosine 3',5'-bisphosphate + keratan 6'-sulfate.. Functionally, sulfotransferase that utilizes 3'-phospho-5'-adenylyl sulfate (PAPS) as sulfonate donor to catalyze the transfer of sulfate to position 6 of the N-acetylgalactosamine (GalNAc) residue of chondroitin. Chondroitin sulfate constitutes the predominant proteoglycan present in cartilage and is distributed on the surfaces of many cells and extracellular matrices. Catalyzes with a lower efficiency the sulfation of Gal residues of keratan sulfate, another glycosaminoglycan. Can also catalyze the sulfation of the Gal residues in sialyl N-acetyllactosamine (sialyl LacNAc) oligosaccharides. May play a role in the maintenance of naive T-lymphocytes in the spleen. This is Carbohydrate sulfotransferase 3 (Chst3) from Mus musculus (Mouse).